Here is a 577-residue protein sequence, read N- to C-terminus: NKAP family protein UM04995 (577 aa).

Positions 1 to 479 are disordered; the sequence is MPTLAERLGS…YGGALLPGEG (479 aa). Positions 20-31 are enriched in basic and acidic residues; sequence KSSHDREQELRS. Over residues 36–49 the composition is skewed to polar residues; the sequence is SKQTSRNTAHQDLA. The span at 50–60 shows a compositional bias: basic and acidic residues; the sequence is SSERRSIDREL. The span at 70-89 shows a compositional bias: low complexity; the sequence is SPLSSPQNGSSPRRQRGSPS. Basic and acidic residues-rich tracts occupy residues 127–163, 170–193, and 265–297; these read PREDVQSDRSPRSYPRRRDDQRWQANERRANQDDSRR, SGDRRRYFDSNDDRNPRQEDREAP, and DSSSRHRDKDKDKDRDKDKGKRDRKHSSSDKHH. Composition is skewed to basic residues over residues 298–316 and 325–336; these read SSSRSHRHHSSTSRRRRSS and SRHRHTRSSRSH. Residues 340–350 are compositionally biased toward acidic residues; sequence DDDDDDDEDVD. Positions 363–385 are enriched in basic and acidic residues; it reads KVSDGSDSGRSESETDSDSDARS. Over residues 386–395 the composition is skewed to basic residues; that stretch reads SRHRRRHHKS. 2 stretches are compositionally biased toward basic and acidic residues: residues 396–408 and 417–439; these read DRSSTHRRRESEK and SESESSLHSEHNQKETAKSRRDS. Residues 529 to 570 are a coiled coil; it reads RKENQVISAEEKRTMLRLQAEEKAKKEREIVSQFKELVDTLQ.

This sequence belongs to the NKAP family.

This is NKAP family protein UM04995 from Mycosarcoma maydis (Corn smut fungus).